A 344-amino-acid chain; its full sequence is S-adenosylmethionine:tRNA ribosyltransferase-isomerase (344 aa).

Belongs to the QueA family. In terms of assembly, monomer.

Its subcellular location is the cytoplasm. The catalysed reaction is 7-aminomethyl-7-carbaguanosine(34) in tRNA + S-adenosyl-L-methionine = epoxyqueuosine(34) in tRNA + adenine + L-methionine + 2 H(+). Its pathway is tRNA modification; tRNA-queuosine biosynthesis. Its function is as follows. Transfers and isomerizes the ribose moiety from AdoMet to the 7-aminomethyl group of 7-deazaguanine (preQ1-tRNA) to give epoxyqueuosine (oQ-tRNA). This chain is S-adenosylmethionine:tRNA ribosyltransferase-isomerase, found in Levilactobacillus brevis (strain ATCC 367 / BCRC 12310 / CIP 105137 / JCM 1170 / LMG 11437 / NCIMB 947 / NCTC 947) (Lactobacillus brevis).